A 317-amino-acid polypeptide reads, in one-letter code: Zinc metalloproteinase/disintegrin (317 aa).

The propeptide occupies 1 to 26 (EAPKMCGVTQNWESYEPIKKASQSNL). The 197-residue stretch at 32 to 228 (RYIELVIVAD…QKPQCILNKP (197 aa)) folds into the Peptidase M12B domain. Ca(2+)-binding residues include glutamate 35 and aspartate 119. Cystine bridges form between cysteine 143-cysteine 223, cysteine 183-cysteine 207, and cysteine 185-cysteine 190. Histidine 168 provides a ligand contact to Zn(2+). Glutamate 169 is an active-site residue. 2 residues coordinate Zn(2+): histidine 172 and histidine 178. Ca(2+)-binding residues include cysteine 223 and asparagine 226. A propeptide spanning residues 229–244 (LRTDTVSTPVSGNELL) is cleaved from the precursor. One can recognise a Disintegrin domain in the interval 236–317 (TPVSGNELLE…AGCPRNPFHA (82 aa)). 6 disulfides stabilise this stretch: cysteine 250/cysteine 259, cysteine 252/cysteine 260, cysteine 265/cysteine 279, cysteine 273/cysteine 303, cysteine 278/cysteine 282, and cysteine 291/cysteine 310. Residues 295-297 (RGD) carry the Cell attachment site motif.

Belongs to the venom metalloproteinase (M12B) family. P-II subfamily. P-IIa sub-subfamily. As to quaternary structure, monomer. Zn(2+) serves as cofactor. Expressed by the venom gland.

The protein localises to the secreted. Its function is as follows. metalloproteinase that impairs hemostasis in the envenomed animal. In terms of biological role, inhibits GPIIb/GPIIIa (ITGA2B/ITGB3) binding to immobilized fibrinogen with an IC(50) of 2.2 nM and ADP-induced platelet aggregation with an IC(50) of 131 nM, respectively. Inhibits angiogenesis. By binding to vitronectin receptor (alpha-V/beta-3 (ITGAV/ITGB3)), also induces apoptosis of endothelial cells by blocking their attachment to extracellular matrix proteins. Functionally, inhibits platelet aggregation induced by ADP (IC(50) is 30 nM), collagen (IC(50) is 500 nM), thrombin and epinephrin (IC(50) is 160 nM). This is Zinc metalloproteinase/disintegrin from Gloydius brevicauda (Korean slamosa snake).